The chain runs to 431 residues: MRLAILGGIAVTPERVIEDAGILIDEDGRISFVDTREQLEECEDWEDEIELGEKDVIMPGLINTHTHGPMTLFRGVADDMPLMKWLREEIWPLEERLDAEKCRWGAALAAMEALKSGTTCLADMYFFMDAVAEAYAEVGIRAVISHGMIDLGEEDKREEELKESKRVYRKCQGMEGLIEFSLGPHAPYTCSEELLKEVRRLADEWGVKIQIHVAETEDEVKEVKRKHGKRPVEYLDEIGLLGDDVIAAHCVWLDDKEIEILSKRGVIVSHNPISNMKLASGISPVPEMLERGVNVTIGTDGCASNNNLDMLEEIKVAALLHKVNKMDPSATEMLEILRMATVRAGTVFSSEKIGAIEEGYAADLVVLDGSSPRLNPNHNPISNIVYSASGSDVKHVFVAGELVVKNGKLVKADEQEILENSTECAEQLTSS.

2 residues coordinate Zn(2+): His-65 and His-67. Substrate contacts are provided by Glu-94 and His-185. A Zn(2+)-binding site is contributed by His-212. 2 residues coordinate substrate: Glu-215 and Asp-300. Residue Asp-300 coordinates Zn(2+).

It belongs to the metallo-dependent hydrolases superfamily. MTA/SAH deaminase family. In terms of assembly, homotetramer. It depends on Zn(2+) as a cofactor.

It catalyses the reaction 5'-deoxyadenosine + H2O + H(+) = 5'-deoxyinosine + NH4(+). It carries out the reaction S-adenosyl-L-homocysteine + H2O + H(+) = S-inosyl-L-homocysteine + NH4(+). The enzyme catalyses S-methyl-5'-thioadenosine + H2O + H(+) = S-methyl-5'-thioinosine + NH4(+). The catalysed reaction is adenosine + H2O + H(+) = inosine + NH4(+). It participates in amino-acid biosynthesis; S-adenosyl-L-methionine biosynthesis. Functionally, catalyzes the deamination of three SAM-derived enzymatic products, namely 5'-deoxyadenosine, S-adenosyl-L-homocysteine, and 5'-methylthioadenosine, to produce the inosine analogs. Can also deaminate adenosine. The preferred substrate for this enzyme is 5'-deoxyadenosine, but all these substrates are efficiently deaminated. Likely functions in a S-adenosyl-L-methionine (SAM) recycling pathway from S-adenosyl-L-homocysteine (SAH) produced from SAM-dependent methylation reactions. May also be involved in the recycling of 5'-deoxyadenosine, whereupon the 5'-deoxyribose moiety of 5'-deoxyinosine is further metabolized to deoxyhexoses used for the biosynthesis of aromatic amino acids in methanogens. In Methanopyrus kandleri (strain AV19 / DSM 6324 / JCM 9639 / NBRC 100938), this protein is 5'-deoxyadenosine deaminase.